Reading from the N-terminus, the 263-residue chain is Thiazole synthase (263 aa).

Catalysis depends on K100, which acts as the Schiff-base intermediate with DXP. 1-deoxy-D-xylulose 5-phosphate-binding positions include G161, 188–189, and 210–211; these read AG and NS.

The protein belongs to the ThiG family. In terms of assembly, homotetramer. Forms heterodimers with either ThiH or ThiS.

It is found in the cytoplasm. The catalysed reaction is [ThiS sulfur-carrier protein]-C-terminal-Gly-aminoethanethioate + 2-iminoacetate + 1-deoxy-D-xylulose 5-phosphate = [ThiS sulfur-carrier protein]-C-terminal Gly-Gly + 2-[(2R,5Z)-2-carboxy-4-methylthiazol-5(2H)-ylidene]ethyl phosphate + 2 H2O + H(+). It functions in the pathway cofactor biosynthesis; thiamine diphosphate biosynthesis. Its function is as follows. Catalyzes the rearrangement of 1-deoxy-D-xylulose 5-phosphate (DXP) to produce the thiazole phosphate moiety of thiamine. Sulfur is provided by the thiocarboxylate moiety of the carrier protein ThiS. In vitro, sulfur can be provided by H(2)S. This is Thiazole synthase from Pseudoalteromonas translucida (strain TAC 125).